Reading from the N-terminus, the 529-residue chain is Putative cysteine ligase BshC (529 aa).

Residues 450 to 485 adopt a coiled-coil conformation; the sequence is VKQTKGLENLEKRLLKAQKRNLSDQLQRVIDLQCEL.

The protein belongs to the BshC family.

The polypeptide is Putative cysteine ligase BshC (Flavobacterium johnsoniae (strain ATCC 17061 / DSM 2064 / JCM 8514 / BCRC 14874 / CCUG 350202 / NBRC 14942 / NCIMB 11054 / UW101) (Cytophaga johnsonae)).